We begin with the raw amino-acid sequence, 256 residues long: UPF0259 membrane protein YPO2199/y2042/YP_1997 (256 aa).

6 consecutive transmembrane segments (helical) span residues 20-40 (IAAI…LNQT), 90-110 (FSAL…IAMV), 118-138 (ALQA…LMFI), 141-161 (LVIQ…AIAL), 192-212 (LIVP…FLIS), and 221-241 (IATI…LVYL).

Belongs to the UPF0259 family.

It is found in the cell inner membrane. This Yersinia pestis protein is UPF0259 membrane protein YPO2199/y2042/YP_1997.